Consider the following 459-residue polypeptide: Ribulose bisphosphate carboxylase large chain (459 aa).

Lys4 carries the post-translational modification N6,N6,N6-trimethyllysine. Residues Asn113 and Thr163 each contribute to the substrate site. The active-site Proton acceptor is the Lys165. Lys167 serves as a coordination point for substrate. Residues Lys191, Asp193, and Glu194 each contribute to the Mg(2+) site. Residue Lys191 is modified to N6-carboxylysine. Residue His284 is the Proton acceptor of the active site. Arg285, His317, and Ser369 together coordinate substrate.

Belongs to the RuBisCO large chain family. Type I subfamily. As to quaternary structure, heterohexadecamer of 8 large chains and 8 small chains; disulfide-linked. The disulfide link is formed within the large subunit homodimers. The cofactor is Mg(2+). The disulfide bond which can form in the large chain dimeric partners within the hexadecamer appears to be associated with oxidative stress and protein turnover.

The protein resides in the plastid. The protein localises to the chloroplast. It carries out the reaction 2 (2R)-3-phosphoglycerate + 2 H(+) = D-ribulose 1,5-bisphosphate + CO2 + H2O. The enzyme catalyses D-ribulose 1,5-bisphosphate + O2 = 2-phosphoglycolate + (2R)-3-phosphoglycerate + 2 H(+). RuBisCO catalyzes two reactions: the carboxylation of D-ribulose 1,5-bisphosphate, the primary event in carbon dioxide fixation, as well as the oxidative fragmentation of the pentose substrate in the photorespiration process. Both reactions occur simultaneously and in competition at the same active site. In Geum quellyon (Chilean avens), this protein is Ribulose bisphosphate carboxylase large chain.